The primary structure comprises 204 residues: Inositol diphosphatase DSP5 (204 aa).

A Tyrosine-protein phosphatase domain is found at 19 to 168 (NFSMVEDEIY…FDVLRLKQCL (150 aa)). The interval 75 to 87 (FGIEGKTDPPTPM) is WPD loop important for active site topology. C111 serves as the catalytic Phosphocysteine intermediate.

It belongs to the protein-tyrosine phosphatase family. Atypical dual-specificity phosphatase Siw14-like subfamily. Highly expressed in flowers. Expressed at low levels in roots, leaves, stems and siliques.

It catalyses the reaction 5-diphospho-1D-myo-inositol 1,2,3,4,6-pentakisphosphate + H2O = 1D-myo-inositol hexakisphosphate + phosphate + H(+). It carries out the reaction 1,5-bis(diphospho)-1D-myo-inositol 2,3,4,6-tetrakisphosphate + H2O = 1-diphospho-1D-myo-inositol 2,3,4,5,6-pentakisphosphate + phosphate + 2 H(+). The catalysed reaction is 3,5-bis(diphospho)-1D-myo-inositol 1,2,4,6-tetrakisphosphate + H2O = 3-diphospho-1D-myo-inositol 1,2,4,5,6-pentakisphosphate + phosphate + 2 H(+). The enzyme catalyses 6-diphospho-1D-myo-inositol pentakisphosphate + H2O = 1D-myo-inositol hexakisphosphate + phosphate + H(+). Functionally, cleaves the beta-phosphate at the 5-position of soluble inositol pyrophosphates. Has highest activity on 5-diphosphoinositol 1,2,3,4,6-pentakisphosphate (5-InsP(7)). Possesses low phosphotyrosine phosphatase activity in vitro. Dephosphorylates the phosphoinositides PI(3,5)P2. Hydrolyzes O-methylfluorescein phosphate in vitro. This is Inositol diphosphatase DSP5 from Arabidopsis thaliana (Mouse-ear cress).